A 450-amino-acid chain; its full sequence is Methylenetetrahydrofolate--tRNA-(uracil-5-)-methyltransferase TrmFO (450 aa).

An FAD-binding site is contributed by 10–15; sequence GGGLAG.

It belongs to the MnmG family. TrmFO subfamily. It depends on FAD as a cofactor.

The protein localises to the cytoplasm. It catalyses the reaction uridine(54) in tRNA + (6R)-5,10-methylene-5,6,7,8-tetrahydrofolate + NADH + H(+) = 5-methyluridine(54) in tRNA + (6S)-5,6,7,8-tetrahydrofolate + NAD(+). The catalysed reaction is uridine(54) in tRNA + (6R)-5,10-methylene-5,6,7,8-tetrahydrofolate + NADPH + H(+) = 5-methyluridine(54) in tRNA + (6S)-5,6,7,8-tetrahydrofolate + NADP(+). Its function is as follows. Catalyzes the folate-dependent formation of 5-methyl-uridine at position 54 (M-5-U54) in all tRNAs. The protein is Methylenetetrahydrofolate--tRNA-(uracil-5-)-methyltransferase TrmFO of Anaeromyxobacter dehalogenans (strain 2CP-C).